We begin with the raw amino-acid sequence, 65 residues long: Large ribosomal subunit protein bL35 (65 aa).

This sequence belongs to the bacterial ribosomal protein bL35 family.

The protein is Large ribosomal subunit protein bL35 of Geobacter sp. (strain M21).